The chain runs to 137 residues: Large ribosomal subunit protein uL16 (137 aa).

Belongs to the universal ribosomal protein uL16 family. In terms of assembly, part of the 50S ribosomal subunit.

Binds 23S rRNA and is also seen to make contacts with the A and possibly P site tRNAs. The polypeptide is Large ribosomal subunit protein uL16 (Streptococcus sanguinis (strain SK36)).